The chain runs to 192 residues: Ion-translocating oxidoreductase complex subunit B (192 aa).

The interval 1–26 (MSTIWIAIAALSALALAFGLVLGYAS) is hydrophobic. Residues 32–91 (ENDPIVEEVEAMLPQSQCGQCGYPGCRPYAEAVALNGENINKCGPGGEAMMLKLAEKLNV) form the 4Fe-4S domain. Positions 49, 52, 57, 74, 117, 120, 123, 127, 147, 150, 153, and 157 each coordinate [4Fe-4S] cluster. 4Fe-4S ferredoxin-type domains are found at residues 108-137 (QVAW…GSTK) and 138-167 (AVHT…LRPI).

It belongs to the 4Fe4S bacterial-type ferredoxin family. RnfB subfamily. The complex is composed of six subunits: RnfA, RnfB, RnfC, RnfD, RnfE and RnfG. [4Fe-4S] cluster is required as a cofactor.

It localises to the cell inner membrane. Its function is as follows. Part of a membrane-bound complex that couples electron transfer with translocation of ions across the membrane. The protein is Ion-translocating oxidoreductase complex subunit B of Pectobacterium carotovorum subsp. carotovorum (strain PC1).